The primary structure comprises 47 residues: PhoP/PhoQ regulator MgrB (47 aa).

Residues 6 to 26 form a helical membrane-spanning segment; that stretch reads WVALVVVVLACLLLWAQVFNM.

The protein belongs to the MgrB family. As to quaternary structure, may form homooligomers. Probably interacts with the periplasmic domain of PhoQ.

The protein localises to the cell inner membrane. Functionally, phoP-regulated transcription is redox-sensitive, being activated when the periplasm becomes more reducing. MgrB acts between DsbA/DsbB and PhoP/PhoQ in this pathway. Represses PhoP/PhoQ signaling, possibly by binding to the periplasmic domain of PhoQ, altering its activity and that of downstream effector PhoP. This Escherichia coli O127:H6 (strain E2348/69 / EPEC) protein is PhoP/PhoQ regulator MgrB.